The following is a 149-amino-acid chain: Large ribosomal subunit protein bL9 (149 aa).

The protein belongs to the bacterial ribosomal protein bL9 family.

Its function is as follows. Binds to the 23S rRNA. The chain is Large ribosomal subunit protein bL9 from Proteus mirabilis (strain HI4320).